A 270-amino-acid chain; its full sequence is Phospholipase A and acyltransferase 5 (270 aa).

Disordered regions lie at residues 1–54 and 70–122; these read MGLS…SASS and RRLE…NPRP. 2 stretches are compositionally biased toward polar residues: residues 24–54 and 100–116; these read TQIS…SASS and IPTS…NQAV. Positions 127 to 240 constitute an LRAT domain; the sequence is LIEIFRIGYE…LRYGVPRSQQ (114 aa). Catalysis depends on residues His-137 and His-149. Cys-224 functions as the Acyl-thioester intermediate in the catalytic mechanism.

It belongs to the H-rev107 family. In terms of tissue distribution, isoform 4 shows highest expression level in testis.

Its subcellular location is the cytoplasm. The protein localises to the cytosol. It catalyses the reaction a 1,2-diacyl-sn-glycero-3-phosphocholine + H2O = a 1-acyl-sn-glycero-3-phosphocholine + a fatty acid + H(+). It carries out the reaction a 1,2-diacyl-sn-glycero-3-phosphocholine + H2O = a 2-acyl-sn-glycero-3-phosphocholine + a fatty acid + H(+). The enzyme catalyses 1-hexadecanoyl-2-(5Z,8Z,11Z,14Z-eicosatetraenoyl)-sn-glycero-3-phosphocholine + 1,2-di-(9Z-octadecenoyl)-sn-glycero-3-phosphoethanolamine = N-(5Z,8Z,11Z,14Z-eicosatetraenoyl)-1,2-di-(9Z-octadecenoyl)-sn-glycero-3-phosphoethanolamine + 1-hexadecanoyl-sn-glycero-3-phosphocholine + H(+). The catalysed reaction is 1,2-di-(9Z-octadecenoyl)-sn-glycero-3-phosphoethanolamine + 1,2-dihexadecanoyl-sn-glycero-3-phosphocholine = N-hexadecanoyl-1,2-di-(9Z-octadecenoyl)-sn-glycero-3-phosphoethanolamine + 1-hexadecanoyl-sn-glycero-3-phosphocholine + H(+). It catalyses the reaction 1,2-di-(9Z-octadecenoyl)-sn-glycero-3-phosphoethanolamine + 1,2-dihexadecanoyl-sn-glycero-3-phosphocholine = N-hexadecanoyl-1,2-di-(9Z-octadecenoyl)-sn-glycero-3-phosphoethanolamine + 2-hexadecanoyl-sn-glycero-3-phosphocholine + H(+). It carries out the reaction a 1,2-diacyl-sn-glycero-3-phosphoethanolamine + a 1,2-diacyl-sn-glycero-3-phosphocholine = an N-acyl-1,2-diacyl-sn-glycero-3-phosphoethanolamine + a 1-acyl-sn-glycero-3-phosphocholine + H(+). The enzyme catalyses a 1,2-diacyl-sn-glycero-3-phosphoethanolamine + a 1,2-diacyl-sn-glycero-3-phosphocholine = an N-acyl-1,2-diacyl-sn-glycero-3-phosphoethanolamine + a 2-acyl-sn-glycero-3-phosphocholine + H(+). The catalysed reaction is 1-hexadecanoyl-2-(9Z-octadecenoyl)-sn-glycero-3-phosphocholine + 1,2-di-(9Z-octadecenoyl)-sn-glycero-3-phosphoethanolamine = N,1,2-tri-(9Z-octadecenoyl)-sn-glycero-3-phosphoethanolamine + 1-hexadecanoyl-sn-glycero-3-phosphocholine + H(+). Its function is as follows. Exhibits both phospholipase A1/2 and acyltransferase activities. Shows phospholipase A1 (PLA1) and A2 (PLA2) activity, catalyzing the calcium-independent release of fatty acids from the sn-1 or sn-2 position of glycerophospholipids. Shows N-acyltransferase activity, catalyzing the calcium-independent transfer of a fatty acyl group at the sn-1 position of phosphatidylcholine (PC) and other glycerophospholipids to the primary amine of phosphatidylethanolamine (PE), forming N-acylphosphatidylethanolamine (NAPE), which serves as precursor for N-acylethanolamines (NAEs). This chain is Phospholipase A and acyltransferase 5, found in Mus musculus (Mouse).